A 349-amino-acid polypeptide reads, in one-letter code: S-adenosylmethionine:tRNA ribosyltransferase-isomerase (349 aa).

It belongs to the QueA family. As to quaternary structure, monomer.

The protein localises to the cytoplasm. The catalysed reaction is 7-aminomethyl-7-carbaguanosine(34) in tRNA + S-adenosyl-L-methionine = epoxyqueuosine(34) in tRNA + adenine + L-methionine + 2 H(+). It participates in tRNA modification; tRNA-queuosine biosynthesis. Its function is as follows. Transfers and isomerizes the ribose moiety from AdoMet to the 7-aminomethyl group of 7-deazaguanine (preQ1-tRNA) to give epoxyqueuosine (oQ-tRNA). The chain is S-adenosylmethionine:tRNA ribosyltransferase-isomerase from Pseudomonas putida (strain GB-1).